Here is a 345-residue protein sequence, read N- to C-terminus: CRISPR-associated endonuclease Cas1 1 (345 aa).

3 residues coordinate a divalent metal cation: glutamate 168, histidine 239, and glutamate 254.

This sequence belongs to the CRISPR-associated endonuclease Cas1 family. As to quaternary structure, forms a heterotetramer with a Cas2 homodimer. Homodimer. A divalent metal cation serves as cofactor.

Its function is as follows. CRISPR (clustered regularly interspaced short palindromic repeat), is an adaptive immune system that provides protection against mobile genetic elements (viruses, transposable elements and conjugative plasmids). CRISPR clusters contain sequences complementary to antecedent mobile elements and target invading nucleic acids. CRISPR clusters are transcribed and processed into CRISPR RNA (crRNA). Involved in the integration of spacer DNA into the CRISPR cassette. Acts as a dsDNA and ssRNA nuclease, binds to linear and circular dsDNA and linear ssRNA and ssDNA. The sequence is that of CRISPR-associated endonuclease Cas1 1 from Archaeoglobus fulgidus (strain ATCC 49558 / DSM 4304 / JCM 9628 / NBRC 100126 / VC-16).